Reading from the N-terminus, the 294-residue chain is Cytidine deaminase (294 aa).

2 CMP/dCMP-type deaminase domains span residues 48–168 (DEDA…FGPK) and 186–294 (LTGD…VLLG). Residue 89-91 (NME) participates in substrate binding. Residue His102 participates in Zn(2+) binding. Glu104 serves as the catalytic Proton donor. Zn(2+) is bound by residues Cys129 and Cys132.

Belongs to the cytidine and deoxycytidylate deaminase family. As to quaternary structure, homodimer. The cofactor is Zn(2+).

The catalysed reaction is cytidine + H2O + H(+) = uridine + NH4(+). The enzyme catalyses 2'-deoxycytidine + H2O + H(+) = 2'-deoxyuridine + NH4(+). In terms of biological role, this enzyme scavenges exogenous and endogenous cytidine and 2'-deoxycytidine for UMP synthesis. The polypeptide is Cytidine deaminase (Salmonella arizonae (strain ATCC BAA-731 / CDC346-86 / RSK2980)).